A 121-amino-acid polypeptide reads, in one-letter code: UPF0738 protein RBAM_011600 (121 aa).

The protein belongs to the UPF0738 family.

In Bacillus velezensis (strain DSM 23117 / BGSC 10A6 / LMG 26770 / FZB42) (Bacillus amyloliquefaciens subsp. plantarum), this protein is UPF0738 protein RBAM_011600.